We begin with the raw amino-acid sequence, 432 residues long: Alpha-enolase (432 aa).

Mg(2+) is bound at residue serine 40. Substrate is bound by residues histidine 158 and glutamate 167. The Proton donor role is filled by glutamate 210. Mg(2+)-binding residues include aspartate 245, glutamate 293, and aspartate 318. Substrate is bound by residues glutamate 293 and aspartate 318. The Proton acceptor role is filled by lysine 343. Residues 370–373 (SHRS) and lysine 394 contribute to the substrate site.

This sequence belongs to the enolase family. In terms of assembly, dimer. Mg(2+) is required as a cofactor.

Its subcellular location is the cytoplasm. It catalyses the reaction (2R)-2-phosphoglycerate = phosphoenolpyruvate + H2O. The protein operates within carbohydrate degradation; glycolysis; pyruvate from D-glyceraldehyde 3-phosphate: step 4/5. In terms of biological role, multifunctional enzyme that, as well as its role in glycolysis, plays a part in various processes such as growth control, hypoxia tolerance and allergic responses. This Thunnus albacares (Yellowfin tuna) protein is Alpha-enolase.